A 210-amino-acid polypeptide reads, in one-letter code: Small ribosomal subunit protein uS3 (210 aa).

The KH type-2 domain occupies 38–106; the sequence is IRAWLKKRLA…EVQINIVEIR (69 aa).

Belongs to the universal ribosomal protein uS3 family. Part of the 30S ribosomal subunit. Forms a tight complex with proteins S10 and S14.

Its function is as follows. Binds the lower part of the 30S subunit head. Binds mRNA in the 70S ribosome, positioning it for translation. This chain is Small ribosomal subunit protein uS3, found in Magnetococcus marinus (strain ATCC BAA-1437 / JCM 17883 / MC-1).